We begin with the raw amino-acid sequence, 342 residues long: Nucleoid-associated protein Shewana3_2426 (342 aa).

This sequence belongs to the YejK family.

The protein localises to the cytoplasm. The protein resides in the nucleoid. This is Nucleoid-associated protein Shewana3_2426 from Shewanella sp. (strain ANA-3).